Consider the following 304-residue polypeptide: Eukaryotic translation initiation factor 2 subunit alpha (304 aa).

The S1 motif domain occupies 17–88 (DDIVMVNVQQ…EKGYIDLSKR (72 aa)). Ser52 bears the Phosphoserine; by GCN2 mark. Residues 283 to 304 (LESKELDNRSDSEDDEDESDDE) are disordered. Basic and acidic residues predominate over residues 284-293 (ESKELDNRSD). 2 positions are modified to phosphoserine: Ser292 and Ser294. The span at 294 to 304 (SEDDEDESDDE) shows a compositional bias: acidic residues.

The protein belongs to the eIF-2-alpha family. Eukaryotic translation initiation factor 2 eIF2 is a heterotrimeric complex composed of an alpha, a beta and a gamma subunit. The factors eIF-1, eIF-2, eIF-3, TIF5/eIF-5 and methionyl-tRNAi form a multifactor complex (MFC) that may bind to the 40S ribosome. Interacts with CDC123; the interaction is direct. Interacts with GCD1. In terms of processing, phosphorylated; phosphorylation on Ser-52 by the GCN2 protein kinase occurs in response to low amino acid, carbon, or purine availability. Phosphorylation inhibits the guanine nucleotide exchange factor activity of the eIF2B complex.

It is found in the cytoplasm. The protein localises to the cytosol. In terms of biological role, eIF-2 functions in the early steps of protein synthesis by forming a ternary complex with GTP and initiator tRNA. This complex binds to a 40S ribosomal subunit, followed by mRNA binding to form a 43S pre-initiation complex. Junction of the 60S ribosomal subunit to form the 80S initiation complex is preceded by hydrolysis of the GTP bound to eIF-2 and release of an eIF-2-GDP binary complex. In order for eIF-2 to recycle and catalyze another round of initiation, the GDP bound to eIF-2 must exchange with GTP by way of a reaction catalyzed by eIF2B. The sequence is that of Eukaryotic translation initiation factor 2 subunit alpha from Saccharomyces cerevisiae (strain ATCC 204508 / S288c) (Baker's yeast).